A 401-amino-acid chain; its full sequence is Transcription factor atf-2 (401 aa).

The segment covering 19 to 38 (SASAEFSSSSSDSSNFSEGS) has biased composition (low complexity). Positions 19 to 78 (SASAEFSSSSSDSSNFSEGSPPESRRNSVNESVIKDEHYWERRRRNNDASRRSREKRRQN) are disordered. Positions 41-78 (ESRRNSVNESVIKDEHYWERRRRNNDASRRSREKRRQN) are enriched in basic and acidic residues. Residues 54–100 (DEHYWERRRRNNDASRRSREKRRQNDLAMEEKIMLLSAENERLKSQL) enclose the bZIP 1 domain. Positions 60–85 (RRRRNNDASRRSREKRRQNDLAMEEK) are basic motif 1. The leucine-zipper 1 stretch occupies residues 89-96 (LSAENERL). The span at 181 to 211 (SASSLFSSSSSSAFHPFRPSESAQQSFPSSS) shows a compositional bias: low complexity. Disordered regions lie at residues 181–256 (SASS…PQPV) and 273–345 (QRRP…AAKR). Composition is skewed to polar residues over residues 222-256 (DSST…PQPV) and 273-283 (QRRPSPTVPQS). Residues 305–317 (ESVSSSASFSPSH) show a composition bias toward low complexity. In terms of domain architecture, bZIP 2 spans 329–392 (SPQYVDRRRR…AHFKSVLAQR (64 aa)). A basic motif 2 region spans residues 335–360 (RRRRNNEAAKRCRANRRAVFEYRSRR). The stretch at 361–388 (VQLLEGENEDLRTQIETLKAEIAHFKSV) forms a coiled coil. Residues 364-378 (LEGENEDLRTQIETL) are leucine-zipper 2.

This sequence belongs to the bZIP family. In terms of assembly, interacts with cell death specification protein ces-2. Post-translationally, phosphorylated by mitogen-activated protein kinases pmk-2 and pmk-3. May be responsive to osmotic stress.

It is found in the nucleus. Its function is as follows. Acts as a transcription factor that recognizes and binds to the sequence 5'-[GA]TTA[CT]GTAA[CT]-3', a sequence present in many promoters. Involved in the development of the excretory duct cell, by positively modulating embryonic transcription of putative transcription factor lin-48, acting in concert with cell death specification protein ces-2. Negatively modulates expression of key autophagy-related genes, bec-1/ATG6 and lgg-1/ATG8, and may link together autophagy and apoptosis during development. Positively modulates expression of neuropeptide pigment dispersing factor homologs pdf-1 and pdf-2. This Caenorhabditis elegans protein is Transcription factor atf-2.